Consider the following 487-residue polypeptide: Putative beta-glucosidase 35 (487 aa).

Positions 1 to 27 are cleaved as a signal peptide; it reads MGIRMGRRLLLITLLLGALLCNNVAYA. Q48 provides a ligand contact to a beta-D-glucoside. N-linked (GlcNAc...) asparagine glycosylation is found at N76 and N116. Residues H151 and 200-201 contribute to the a beta-D-glucoside site; that span reads NE. The active-site Proton donor is E201. C220 and C228 are disulfide-bonded. Y344 lines the a beta-D-glucoside pocket. Residue N369 is glycosylated (N-linked (GlcNAc...) asparagine). E414 serves as a coordination point for a beta-D-glucoside. Catalysis depends on E414, which acts as the Nucleophile. N-linked (GlcNAc...) asparagine glycans are attached at residues N418 and N419. F458 is an a beta-D-glucoside binding site.

It belongs to the glycosyl hydrolase 1 family.

It carries out the reaction Hydrolysis of terminal, non-reducing beta-D-glucosyl residues with release of beta-D-glucose.. This is Putative beta-glucosidase 35 (BGLU35) from Oryza sativa subsp. japonica (Rice).